The chain runs to 144 residues: Acylphosphatase-like protein MJ1331 (144 aa).

The Acylphosphatase-like domain maps to 8–100 (TYELRIYGNV…FPNGLNKIST (93 aa)).

This Methanocaldococcus jannaschii (strain ATCC 43067 / DSM 2661 / JAL-1 / JCM 10045 / NBRC 100440) (Methanococcus jannaschii) protein is Acylphosphatase-like protein MJ1331.